We begin with the raw amino-acid sequence, 507 residues long: Probable cyclic di-GMP phosphodiesterase PdeG (507 aa).

A run of 2 helical transmembrane segments spans residues 4–24 (TLIPILVAICLFITGVAILNI) and 217–237 (LIDKGFGILIFILLIACAAAF). Positions 246 to 500 (SATPEEILRR…DLVKIILSKP (255 aa)) constitute an EAL domain.

It is found in the cell membrane. It carries out the reaction 3',3'-c-di-GMP + H2O = 5'-phosphoguanylyl(3'-&gt;5')guanosine + H(+). Its function is as follows. Phosphodiesterase (PDE) that catalyzes the hydrolysis of cyclic-di-GMP (c-di-GMP) to 5'-pGpG. The chain is Probable cyclic di-GMP phosphodiesterase PdeG from Escherichia coli (strain K12).